The following is a 190-amino-acid chain: RING finger protein 227 (190 aa).

The RING-type zinc-finger motif lies at 18–81 (CNICFRPYNL…RRAVTCPFCR (64 aa)). A disordered region spans residues 108–147 (ARAEREGDPMGSPAKDSGEDGEDDDGEAESEKGAGPPSAG). Residues 126–135 (EDGEDDDGEA) show a composition bias toward acidic residues.

This is RING finger protein 227 from Mus musculus (Mouse).